Reading from the N-terminus, the 359-residue chain is B-cell differentiation antigen CD72 (359 aa).

The Cytoplasmic segment spans residues 1 to 95 (MAEAITYADL…LPCRTTCLRY (95 aa)). Tyrosine 7 and tyrosine 39 each carry phosphotyrosine; by LYN. A helical; Signal-anchor for type II membrane protein transmembrane segment spans residues 96 to 116 (LLLGLLLTCLLLGVTAICLGV). The Extracellular portion of the chain corresponds to 117 to 359 (RYLQVSQQLQ…CEMTAFRFPD (243 aa)). A glycan (N-linked (GlcNAc...) asparagine) is linked at asparagine 136. In terms of domain architecture, C-type lectin spans 232 to 352 (CCPSGWIMHQ…RSSLPYICEM (121 aa)). Cystine bridges form between cysteine 233-cysteine 244, cysteine 261-cysteine 350, and cysteine 325-cysteine 342.

Homodimer; disulfide-linked. Associates with CD5. Interacts (tyrosine phosphorylated) with PTPN6/SHP-1. Post-translationally, phosphorylated upon engagement of the B-cell receptor, probably by LYN or SYK. Phosphorylation at Tyr-7 is important for interaction with PTPN6/SHP-1. Pre-B-cells and B-cells but not terminally differentiated plasma cells.

The protein resides in the membrane. Co-receptor of B cell receptor (BCR) that plays both positive and negative roles on B-cell functions. Recognizes the Sm/ribonucleoprotein (RNP) self-antigen ligand, and coligation of CD72 and BCR inhibits BCR signaling. Mechanistically, ligand binding leads to the recruitment of PTPN6/SHP-1 to the BCR complex which is inhibitory to BCR signaling. Also acts as a ligand for CD5 and thereby plays a critical role in maintaining regulatory T and B-cell homeostasis. The chain is B-cell differentiation antigen CD72 (CD72) from Homo sapiens (Human).